Reading from the N-terminus, the 177-residue chain is Large ribosomal subunit protein uL6 (177 aa).

The protein belongs to the universal ribosomal protein uL6 family. In terms of assembly, part of the 50S ribosomal subunit.

Functionally, this protein binds to the 23S rRNA, and is important in its secondary structure. It is located near the subunit interface in the base of the L7/L12 stalk, and near the tRNA binding site of the peptidyltransferase center. This chain is Large ribosomal subunit protein uL6, found in Bradyrhizobium diazoefficiens (strain JCM 10833 / BCRC 13528 / IAM 13628 / NBRC 14792 / USDA 110).